A 779-amino-acid polypeptide reads, in one-letter code: MASQDISYQYKSQQEHYPNEKISDSYVQKQNSKLTQVIQQCFSKAVKIIIQSRTVPPAAASPLLNPALHDDSASGNKINRWFNLHIQNSQDLPKDDLKLWKSNHLQSMPPMIIETYLDLRQLTSSQTIVLNDDNGNPWAVAKSGGKKQEVVLERWLIEFDHTDASGSIVDELPLIYKQAIILFRSIYGFARLMPAFKLKKRLLINKSSTKLNKLTIGNKILDGKQPISSKGRIGLSKTIIPRQMLTTDSHMSQKHFQPIQTSLGTLKISIAYRNHCDFCIHDNEEVLSTHFISMDSTPLTESGHGHTKANNTSMSVSPCSSGHPALREGSPTKRGTPPTAIQPFKVGSISNSPPPASHTPNSGYGGSLERRISITSNRSTSNASLFAMLRNPRSSTSSTHTTSNIPIAPSSSSNSTNATNMNNMSYPRSISSSHGSNMQHDDSMFSNPDSTTNTPRFSSSFGSRASRRYSNTSVRQSTPVAASTLTGGSPLSGLYIDDDISEFVRSIDSKADLRFSNSYTAHNSGEPKNNMGSPSGGDALNKFQMMKSHHQQLGDSVNASLILQHNNAVSGSGSGFGVSNSRHSSTSRKSSHSIRSPSPSMSGLYDVVPGSYGRSERRSSSGAGVPGQLSLPSGGGLAAHSPSATEPTSAATITPRETNFNFSNASFLRSASKLSATPVTSTTTAHATIHSVTGMATSPSLYQRTKVGSSIHYENVFEDDDDDEMVMKKPVVTSSGRDEEQLQHKQMKVVSIEKDAGANNFDDDDLLFTMSDMNLTKSS.

4 disordered regions span residues 298 to 368 (PLTE…GGSL), 392 to 488 (PRSS…LTGG), 520 to 541 (TAHN…DALN), and 571 to 652 (GSGS…SAAT). Positions 308–320 (KANNTSMSVSPCS) are enriched in polar residues. Over residues 394–425 (SSTSSTHTTSNIPIAPSSSSNSTNATNMNNMS) the composition is skewed to low complexity. A compositionally biased stretch (polar residues) spans 426–455 (YPRSISSSHGSNMQHDDSMFSNPDSTTNTP). Residues 456–470 (RFSSSFGSRASRRYS) show a composition bias toward low complexity. Composition is skewed to polar residues over residues 471–488 (NTSV…LTGG) and 520–533 (TAHN…NMGS). Low complexity-rich tracts occupy residues 593–602 (SIRSPSPSMS) and 620–632 (SSGA…LSLP). Over residues 642–652 (PSATEPTSAAT) the composition is skewed to polar residues.

This sequence belongs to the ATG13 family. Fungi subfamily. In terms of assembly, interacts with ATG1 to form the ATG1-ATG13 kinase complex.

Its subcellular location is the cytoplasm. The protein resides in the preautophagosomal structure. Activates the ATG1 kinase in a nutritional condition dependent manner through the TOR pathway, leading to autophagy. Also involved in cytoplasm to vacuole transport (Cvt) and more specifically in Cvt vesicle formation. Seems to play a role in the switching machinery regulating the conversion between the Cvt pathway and autophagy. Finally, ATG13 is also required for glycogen storage during stationary phase. The chain is Autophagy-related protein 13 (ATG13) from Scheffersomyces stipitis (strain ATCC 58785 / CBS 6054 / NBRC 10063 / NRRL Y-11545) (Yeast).